The following is a 654-amino-acid chain: NADPH-dependent diflavin oxidoreductase 1 (654 aa).

The segment covering 1-10 (MSGSQSSGSP) has biased composition (low complexity). The interval 1–22 (MSGSQSSGSPGSPGPPGPPGRS) is disordered. A Flavodoxin-like domain is found at 23–167 (ALVVYGSETG…TFIPWLAGFR (145 aa)). FMN contacts are provided by residues 29–34 (SETGNA), 76–79 (STTG), and 114–123 (LGDSSYPKFN). Positions 235-485 (HDSLTATLVQ…QLQRGGLNSS (251 aa)) constitute an FAD-binding FR-type domain. Residues Arg-389, 419–422 (RQFS), and 458–461 (GVCT) contribute to the FAD site. NADP(+)-binding positions include Thr-500, 568–569 (SR), and 574–578 (KVYVQ). Residue Trp-654 participates in FAD binding.

Belongs to the NADPH-dependent diflavin oxidoreductase NDOR1 family. This sequence in the N-terminal section; belongs to the flavodoxin family. It in the C-terminal section; belongs to the flavoprotein pyridine nucleotide cytochrome reductase family. As to quaternary structure, interacts with dre2; as part of the cytosolic iron-sulfur (Fe-S) protein assembly (CIA) machinery. Requires FAD as cofactor. FMN serves as cofactor.

The protein resides in the cytoplasm. Its subcellular location is the mitochondrion. It catalyses the reaction 2 oxidized [2Fe-2S]-[protein] + NADPH = 2 reduced [2Fe-2S]-[protein] + NADP(+) + H(+). Functionally, NADPH-dependent reductase which is a central component of the cytosolic iron-sulfur (Fe-S) protein assembly (CIA) machinery. Transfers electrons from NADPH via its FAD and FMN prosthetic groups to the [2Fe-2S] cluster of dre2, another key component of the CIA machinery. In turn, this reduced cluster provides electrons for assembly of cytosolic iron-sulfur cluster proteins. Positively controls H(2)O(2)-induced cell death. The chain is NADPH-dependent diflavin oxidoreductase 1 from Emericella nidulans (strain FGSC A4 / ATCC 38163 / CBS 112.46 / NRRL 194 / M139) (Aspergillus nidulans).